Here is a 105-residue protein sequence, read N- to C-terminus: uncharacterized protein (105 aa).

3 helical membrane-spanning segments follow: residues 3–23 (ISPLIAGLIGGFTAAILQALF), 41–61 (DLVNWIINHLFGTTLGMALVS), and 63–83 (AFPVLTVVGIFIGALITTFIY).

The protein resides in the cell membrane. This is an uncharacterized protein from Methanocaldococcus jannaschii (strain ATCC 43067 / DSM 2661 / JAL-1 / JCM 10045 / NBRC 100440) (Methanococcus jannaschii).